The primary structure comprises 297 residues: Ribosomal RNA small subunit methyltransferase H (297 aa).

S-adenosyl-L-methionine contacts are provided by residues 37–39 (GGH), glutamate 56, phenylalanine 87, aspartate 102, and histidine 109.

It belongs to the methyltransferase superfamily. RsmH family.

It is found in the cytoplasm. The enzyme catalyses cytidine(1402) in 16S rRNA + S-adenosyl-L-methionine = N(4)-methylcytidine(1402) in 16S rRNA + S-adenosyl-L-homocysteine + H(+). Its function is as follows. Specifically methylates the N4 position of cytidine in position 1402 (C1402) of 16S rRNA. In Borrelia hermsii (strain HS1 / DAH), this protein is Ribosomal RNA small subunit methyltransferase H.